Consider the following 302-residue polypeptide: Deoxyhypusine hydroxylase (302 aa).

Methionine 1 carries the post-translational modification N-acetylmethionine. HEAT-like PBS-type repeat units follow at residues 54–80 (LKHELAYCLGQMRDARAIPVLADVLQD), 87–113 (VRHEAGEALGAIGNPEVLGLLKQYSTD), 175–201 (ERYRAMFALRNVGGKEAALALAEGLQC), 206–232 (FRHEVGYVLGQLQHEAAVPGLAATLAR), and 239–265 (VRHECAEALGAIARPACLAALREHIED). Fe cation contacts are provided by histidine 56, histidine 89, and glutamate 90. Positions 208, 241, and 242 each coordinate Fe cation.

The protein belongs to the deoxyhypusine hydroxylase family. Fe(2+) is required as a cofactor.

It carries out the reaction [eIF5A protein]-deoxyhypusine + AH2 + O2 = [eIF5A protein]-hypusine + A + H2O. It participates in protein modification; eIF5A hypusination. Functionally, catalyzes the hydroxylation of the N(6)-(4-aminobutyl)-L-lysine intermediate produced by deoxyhypusine synthase/DHPS on a critical lysine of the eukaryotic translation initiation factor 5A/eIF-5A. This is the second step of the post-translational modification of that lysine into an unusual amino acid residue named hypusine. Hypusination is unique to mature eIF-5A factor and is essential for its function. This Mus musculus (Mouse) protein is Deoxyhypusine hydroxylase.